A 377-amino-acid polypeptide reads, in one-letter code: Nitric oxide reductase FlRd-NAD(+) reductase (377 aa).

Belongs to the FAD-dependent oxidoreductase family. It depends on FAD as a cofactor.

It localises to the cytoplasm. The catalysed reaction is 2 reduced [nitric oxide reductase rubredoxin domain] + NAD(+) + H(+) = 2 oxidized [nitric oxide reductase rubredoxin domain] + NADH. Its pathway is nitrogen metabolism; nitric oxide reduction. Functionally, one of at least two accessory proteins for anaerobic nitric oxide (NO) reductase. Reduces the rubredoxin moiety of NO reductase. The sequence is that of Nitric oxide reductase FlRd-NAD(+) reductase from Salmonella dublin (strain CT_02021853).